The chain runs to 322 residues: Putative MgpC-like protein MPN_367 (322 aa).

Residues Met-1 to Asn-48 show a composition bias toward low complexity. Disordered stretches follow at residues Met-1 to Ser-59 and Asp-118 to Leu-145. Residues Thr-120–Gly-134 show a composition bias toward polar residues.

The protein belongs to the MgpC family.

The polypeptide is Putative MgpC-like protein MPN_367 (Mycoplasma pneumoniae (strain ATCC 29342 / M129 / Subtype 1) (Mycoplasmoides pneumoniae)).